The following is a 506-amino-acid chain: NAD(P)H-quinone oxidoreductase subunit 2 (506 aa).

13 consecutive transmembrane segments (helical) span residues 14-34 (AIIP…VDLA), 42-62 (WAPS…TLQW), 79-99 (LAIA…LISW), 108-128 (PIGE…LLCG), 132-152 (LISV…LSGY), 167-187 (LLVG…LYGL), 206-226 (FITS…IAAV), 240-260 (PTPV…AFAI), 276-296 (LLFT…ALAQ), 302-322 (MLAY…VSGT), 330-350 (VLYL…VILF), 374-394 (LGLS…GFFG), and 409-429 (LLVI…ISVI).

Belongs to the complex I subunit 2 family. NDH-1 can be composed of about 15 different subunits; different subcomplexes with different compositions have been identified which probably have different functions.

It localises to the cellular thylakoid membrane. The enzyme catalyses a plastoquinone + NADH + (n+1) H(+)(in) = a plastoquinol + NAD(+) + n H(+)(out). It carries out the reaction a plastoquinone + NADPH + (n+1) H(+)(in) = a plastoquinol + NADP(+) + n H(+)(out). In terms of biological role, NDH-1 shuttles electrons from an unknown electron donor, via FMN and iron-sulfur (Fe-S) centers, to quinones in the respiratory and/or the photosynthetic chain. The immediate electron acceptor for the enzyme in this species is believed to be plastoquinone. Couples the redox reaction to proton translocation, and thus conserves the redox energy in a proton gradient. Cyanobacterial NDH-1 also plays a role in inorganic carbon-concentration. The chain is NAD(P)H-quinone oxidoreductase subunit 2 from Prochlorococcus marinus (strain MIT 9301).